The sequence spans 476 residues: Scopoletin glucosyltransferase (476 aa).

Residue histidine 16 is the Proton acceptor of the active site. Histidine 16 contributes to the an anthocyanidin binding site. Aspartate 119 acts as the Charge relay in catalysis. UDP-alpha-D-glucose-binding residues include alanine 343, glutamine 345, histidine 360, tryptophan 363, asparagine 364, serine 365, and glutamate 368. Residue alanine 383 coordinates an anthocyanidin. 2 residues coordinate UDP-alpha-D-glucose: glutamate 384 and glutamine 385.

The protein belongs to the UDP-glycosyltransferase family.

It catalyses the reaction scopoletin + UDP-alpha-D-glucose = scopolin + UDP + H(+). Functionally, glucosyltransferase acting preferentially on aromatic substrates of the phenylpropanoid types. The best substrates are scopoletin and esculetin. Required for full resistance to virus. The polypeptide is Scopoletin glucosyltransferase (TOGT1) (Nicotiana tabacum (Common tobacco)).